The following is a 214-amino-acid chain: Adenylate kinase (214 aa).

ATP is bound at residue 10 to 15; the sequence is GAGKGT. Positions 30 to 59 are NMP; the sequence is STGDMFRDHKARGTELGKTVQAIMDAGGLV. AMP contacts are provided by residues Thr31, Arg36, 57–59, 85–88, and Gln92; these read GLV and GYPR. The LID stretch occupies residues 126–163; sequence GRRSCPKCGAVYHVSANPPRRMGYCDRDDAGLVQRDDD. Arg127 is an ATP binding site. Zn(2+) contacts are provided by Cys130 and Cys133. Residue 136-137 coordinates ATP; the sequence is VY. Zn(2+) contacts are provided by Cys150 and Asp153. Residues Arg160 and Arg171 each coordinate AMP. Gly199 serves as a coordination point for ATP.

Belongs to the adenylate kinase family. In terms of assembly, monomer.

The protein localises to the cytoplasm. The enzyme catalyses AMP + ATP = 2 ADP. It participates in purine metabolism; AMP biosynthesis via salvage pathway; AMP from ADP: step 1/1. Functionally, catalyzes the reversible transfer of the terminal phosphate group between ATP and AMP. Plays an important role in cellular energy homeostasis and in adenine nucleotide metabolism. The protein is Adenylate kinase of Anaeromyxobacter sp. (strain Fw109-5).